A 236-amino-acid polypeptide reads, in one-letter code: Purine nucleoside phosphorylase DeoD-type (236 aa).

Histidine 4 is a binding site for a purine D-ribonucleoside. Phosphate-binding positions include glycine 20, arginine 24, arginine 43, and 87–90 (RVGT). Residues 179 to 181 (EME) and 203 to 204 (SD) contribute to the a purine D-ribonucleoside site. Aspartate 204 serves as the catalytic Proton donor.

It belongs to the PNP/UDP phosphorylase family. As to quaternary structure, homohexamer; trimer of homodimers.

It catalyses the reaction a purine D-ribonucleoside + phosphate = a purine nucleobase + alpha-D-ribose 1-phosphate. The enzyme catalyses a purine 2'-deoxy-D-ribonucleoside + phosphate = a purine nucleobase + 2-deoxy-alpha-D-ribose 1-phosphate. In terms of biological role, catalyzes the reversible phosphorolytic breakdown of the N-glycosidic bond in the beta-(deoxy)ribonucleoside molecules, with the formation of the corresponding free purine bases and pentose-1-phosphate. The protein is Purine nucleoside phosphorylase DeoD-type of Streptococcus pneumoniae serotype 2 (strain D39 / NCTC 7466).